Consider the following 285-residue polypeptide: Acetyl-coenzyme A carboxylase carboxyl transferase subunit beta (285 aa).

Residues 29–285 form the CoA carboxyltransferase N-terminal domain; the sequence is IMTKCPNCKK…ILKIHQEVSN (257 aa). Residues C33, C36, C52, and C55 each contribute to the Zn(2+) site. The C4-type zinc finger occupies 33–55; it reads CPNCKKIMYTKELNENLNVCFNC.

Belongs to the AccD/PCCB family. As to quaternary structure, acetyl-CoA carboxylase is a heterohexamer composed of biotin carboxyl carrier protein (AccB), biotin carboxylase (AccC) and two subunits each of ACCase subunit alpha (AccA) and ACCase subunit beta (AccD). It depends on Zn(2+) as a cofactor.

The protein localises to the cytoplasm. The enzyme catalyses N(6)-carboxybiotinyl-L-lysyl-[protein] + acetyl-CoA = N(6)-biotinyl-L-lysyl-[protein] + malonyl-CoA. The protein operates within lipid metabolism; malonyl-CoA biosynthesis; malonyl-CoA from acetyl-CoA: step 1/1. In terms of biological role, component of the acetyl coenzyme A carboxylase (ACC) complex. Biotin carboxylase (BC) catalyzes the carboxylation of biotin on its carrier protein (BCCP) and then the CO(2) group is transferred by the transcarboxylase to acetyl-CoA to form malonyl-CoA. The protein is Acetyl-coenzyme A carboxylase carboxyl transferase subunit beta of Staphylococcus epidermidis (strain ATCC 35984 / DSM 28319 / BCRC 17069 / CCUG 31568 / BM 3577 / RP62A).